The following is a 166-amino-acid chain: Coiled-coil domain-containing protein 12 (166 aa).

M1 carries the post-translational modification N-acetylmethionine. Residues 8 to 28 (VGRLEEEALRRKERLKALREK) adopt a coiled-coil conformation. Positions 21-53 (RLKALREKTGRKDREDGEPQTKQLREEGEEVGK) are enriched in basic and acidic residues. The segment at 21–55 (RLKALREKTGRKDREDGEPQTKQLREEGEEVGKHR) is disordered. K53 carries the N6-acetyllysine modification. K94 is covalently cross-linked (Glycyl lysine isopeptide (Lys-Gly) (interchain with G-Cter in SUMO2)). A coiled-coil region spans residues 115-144 (DLKRDVAKKLEKLEKRTQRAIAELIRERLK). The interval 146 to 166 (QEDSLASAVDATTGQEACDSD) is disordered. A phosphoserine mark is found at S149 and S165.

The protein is Coiled-coil domain-containing protein 12 (Ccdc12) of Mus musculus (Mouse).